The chain runs to 500 residues: Pentatricopeptide repeat-containing protein At1g06580 (500 aa).

PPR repeat units follow at residues 78 to 112 (SIVD…GISH), 113 to 147 (DLYS…GFEP), 148 to 182 (SIVT…GYEP), 183 to 217 (NVVI…GIRP), 218 to 252 (DVVT…GISP), 253 to 287 (DVIT…SVNP), 288 to 322 (NIVT…GFFP), 323 to 357 (NAVT…GVDG), 358 to 392 (DTFT…GVHP), 393 to 427 (DMYT…KTVV), 428 to 462 (GIIT…GVSP), and 463 to 498 (DVIT…GLMP).

It belongs to the PPR family. P subfamily.

The chain is Pentatricopeptide repeat-containing protein At1g06580 from Arabidopsis thaliana (Mouse-ear cress).